Reading from the N-terminus, the 318-residue chain is Transaldolase (318 aa).

Lysine 132 serves as the catalytic Schiff-base intermediate with substrate.

Belongs to the transaldolase family. Type 1 subfamily. In terms of assembly, homodimer.

The protein resides in the cytoplasm. The enzyme catalyses D-sedoheptulose 7-phosphate + D-glyceraldehyde 3-phosphate = D-erythrose 4-phosphate + beta-D-fructose 6-phosphate. It participates in carbohydrate degradation; pentose phosphate pathway; D-glyceraldehyde 3-phosphate and beta-D-fructose 6-phosphate from D-ribose 5-phosphate and D-xylulose 5-phosphate (non-oxidative stage): step 2/3. Functionally, transaldolase is important for the balance of metabolites in the pentose-phosphate pathway. This is Transaldolase from Shewanella pealeana (strain ATCC 700345 / ANG-SQ1).